The primary structure comprises 428 residues: Gamma-glutamyl phosphate reductase (428 aa).

This sequence belongs to the gamma-glutamyl phosphate reductase family.

It is found in the cytoplasm. The enzyme catalyses L-glutamate 5-semialdehyde + phosphate + NADP(+) = L-glutamyl 5-phosphate + NADPH + H(+). It participates in amino-acid biosynthesis; L-proline biosynthesis; L-glutamate 5-semialdehyde from L-glutamate: step 2/2. In terms of biological role, catalyzes the NADPH-dependent reduction of L-glutamate 5-phosphate into L-glutamate 5-semialdehyde and phosphate. The product spontaneously undergoes cyclization to form 1-pyrroline-5-carboxylate. The protein is Gamma-glutamyl phosphate reductase of Treponema pallidum (strain Nichols).